A 121-amino-acid chain; its full sequence is RxLR effector protein PexRD2 (121 aa).

An N-terminal signal peptide occupies residues 1-20 (MRLSYVIVVIATSFLVTTEA). Residues 38 to 56 (RLLRKHYTAAENDDDSEAR) carry the RxLR-dEER motif. The WY domain stretch occupies residues 57 to 121 (ALNTEKMKTM…LNYVAEHTAV (65 aa)).

It belongs to the RxLR effector family. As to quaternary structure, homodimer. Interacts with host MAPKKK epsilon (via its kinase domain).

It is found in the secreted. It localises to the host cytoplasm. The protein resides in the host nucleus. In terms of biological role, effector that enhances P.infestans colonization of Nicotiana benthamiana leaves. Induces a weak Cell death response in N.benthamiana. PexRD2-induced cell death is dependent on SGT1, suggesting that PexRD2 is recognized by the plant immune system. Interacts with the kinase domain of the host MAPKKK epsilon, a positive regulator of cell death associated with plant immunity, and perturbs signaling pathways triggered by MAPKKK epsilon. The protein is RxLR effector protein PexRD2 of Phytophthora infestans (strain T30-4) (Potato late blight agent).